The following is a 1054-amino-acid chain: Reverse gyrase (1054 aa).

The RG N-terminal-type zinc-finger motif lies at 1–43; the sequence is MIPVVYSNLCPVCGGDLESKEIEKHVCFRKKRSLCLFPEDFLL. Residues Cys10, Cys13, Cys27, and Cys35 each coordinate Zn(2+). Cys35 and Cys650 are oxidised to a cystine. ATP is bound by residues Gln61, Lys84, Thr85, and Ser86. The region spanning 65 to 245 is the Helicase ATP-binding domain; that stretch reads AKRILRKESF…FRQLLNFDIG (181 aa). Residues 182–185 carry the DEAD box motif; it reads DDVD. A latch region region spans residues 352–427; the sequence is PSFRVTIEDI…EGEVIFPDLR (76 aa). The interval 502-1054 is topoisomerase I; sequence DLIKPALFIV…DLYAEIKSID (553 aa). A Toprim domain is found at 506 to 662; the sequence is PALFIVESPT…VKRAEFHEVT (157 aa). Glu512 serves as a coordination point for Mg(2+). The segment at 581–609 adopts an RG C-terminal-type zinc-finger fold; sequence IKRCRDCGYQFTEDRESCPKCGSENVDNS. Cys584, Cys587, Cys598, and Cys601 together coordinate Zn(2+). Asp631 contributes to the Mg(2+) binding site. Residues 677-1054 enclose the Topo IA-type catalytic domain; the sequence is DENLVKAQVV…DLYAEIKSID (378 aa). Catalysis depends on Tyr809, which acts as the O-(5'-phospho-DNA)-tyrosine intermediate.

It in the N-terminal section; belongs to the DEAD box helicase family. DDVD subfamily. This sequence in the C-terminal section; belongs to the type IA topoisomerase family. As to quaternary structure, monomer. Zn(2+) serves as cofactor. The cofactor is Mg(2+).

Its subcellular location is the cytoplasm. The enzyme catalyses ATP + H2O = ADP + phosphate + H(+). Its function is as follows. Modifies the topological state of DNA by introducing positive supercoils in an ATP-dependent process, increasing the linking number in steps of +1. Very efficient supercoiling occurs on relaxed DNA with a single-stranded bubble; the minimal bubble is 20 nucleotides (nt) and up to 10 positive supercoils can be introduced into a 3.1 kb plasmid with a 50 nt bubble. Positively supercoils DNA with all (d)NTPS, although it requires about 10-fold more of non-(d)ATP. In the absence of ATP (or at low levels of enzyme), or in the presence of ADP, relaxes negative supercoils. Only relaxes positive supercoils when the substrate contains a bubble. Also promotes strand annealing of complementary ssDNA circles. Binds to single-stranded DNA, transiently cleaves and then rejoins the ends, introducing a positive supercoil in the process. The scissile phosphodiester is attacked by the catalytic tyrosine of the enzyme, resulting in the formation of a DNA-(5'-phosphotyrosyl)-enzyme intermediate. Probably involved in rewinding DNA strands in regions of the chromosome that have opened up to allow replication, transcription, DNA repair and/or for DNA protection. In terms of biological role, in vitro protects DNA against degradation at 90 degrees Celsius, reducing dsDNA breakage about 8-fold; ATP hydrolysis is not necessary, while ADP decreases the protection somewhat. Coats all forms of dsDNA; the DNA is protected against cleavage and transcription. Recognizes nicked DNA and forms a coat at the nicking site, which may help hold DNA in a structure amenable to repair. The polypeptide is Reverse gyrase (Archaeoglobus fulgidus (strain ATCC 49558 / DSM 4304 / JCM 9628 / NBRC 100126 / VC-16)).